Reading from the N-terminus, the 252-residue chain is MLLAVDIGNTSTALGLFSGEELIAHFRIHTDRMRMESEYRVILKNLFALEDLPPPKAALLASVVPPVEREMKRAIERLFGVEARVVEAADTGLEVLIDNPREAGADRLVNAVGALAYPSPTGRYIVVDFGTATTFDLVEAPNRYLGGAIAIGPQTAADALAQRTAKLPRIDLTPPKAAVGKNTLEALRSGLVLGYAALVEGMVRRFKEEAGEALVIATGGFAETLRPLCPCFDVVDEDLTLKGLLRIHLERG.

Asp-6–Ala-13 provides a ligand contact to ATP. Residue Gly-104–Arg-107 participates in substrate binding. Asp-106 serves as the catalytic Proton acceptor. Asp-128 lines the K(+) pocket. Thr-131 provides a ligand contact to ATP. Thr-183 contacts substrate.

Belongs to the type III pantothenate kinase family. As to quaternary structure, homodimer. NH4(+) serves as cofactor. It depends on K(+) as a cofactor.

Its subcellular location is the cytoplasm. It carries out the reaction (R)-pantothenate + ATP = (R)-4'-phosphopantothenate + ADP + H(+). It functions in the pathway cofactor biosynthesis; coenzyme A biosynthesis; CoA from (R)-pantothenate: step 1/5. Its function is as follows. Catalyzes the phosphorylation of pantothenate (Pan), the first step in CoA biosynthesis. In Thermus thermophilus (strain ATCC BAA-163 / DSM 7039 / HB27), this protein is Type III pantothenate kinase.